The sequence spans 221 residues: MAYSKNFSIEELRFDNKGLIPAIAQDWLDGSILMLAWMNKESLNKTLETRNVHYWSRSRSEIWRKGATSGSTQFLKEIRFDCDNDALVLSIEQNGSGACHTGEKSCFFNEIDSISMNKTAKKTSPFSNICSELFDTLHERSINPLEKSYTNHLLTKGSNTILKKIGEETAEFIMACKDNDKDEIANEASDIIYHLQVALIYKGVKWRDVLNVLESRRGKNN.

The tract at residues 1-129 (MAYSKNFSIE…AKKTSPFSNI (129 aa)) is phosphoribosyl-AMP cyclohydrolase. The segment at 130-221 (CSELFDTLHE…VLESRRGKNN (92 aa)) is phosphoribosyl-ATP pyrophosphohydrolase.

This sequence in the N-terminal section; belongs to the PRA-CH family. In the C-terminal section; belongs to the PRA-PH family.

It localises to the cytoplasm. The catalysed reaction is 1-(5-phospho-beta-D-ribosyl)-ATP + H2O = 1-(5-phospho-beta-D-ribosyl)-5'-AMP + diphosphate + H(+). The enzyme catalyses 1-(5-phospho-beta-D-ribosyl)-5'-AMP + H2O = 1-(5-phospho-beta-D-ribosyl)-5-[(5-phospho-beta-D-ribosylamino)methylideneamino]imidazole-4-carboxamide. It functions in the pathway amino-acid biosynthesis; L-histidine biosynthesis; L-histidine from 5-phospho-alpha-D-ribose 1-diphosphate: step 2/9. The protein operates within amino-acid biosynthesis; L-histidine biosynthesis; L-histidine from 5-phospho-alpha-D-ribose 1-diphosphate: step 3/9. This chain is Histidine biosynthesis bifunctional protein HisIE, found in Prochlorococcus marinus subsp. pastoris (strain CCMP1986 / NIES-2087 / MED4).